Here is a 330-residue protein sequence, read N- to C-terminus: ADP-L-glycero-D-manno-heptose-6-epimerase (330 aa).

Residues 11-12 (FI), 32-33 (DN), K39, K54, 75-79 (EGACS), and N92 contribute to the NADP(+) site. The active-site Proton acceptor is Y139. K143 contacts NADP(+). N168 provides a ligand contact to substrate. 2 residues coordinate NADP(+): V169 and K177. Residue K177 is the Proton acceptor of the active site. Substrate is bound by residues R179, H186, 200–203 (FGEY), R213, and Y292.

It belongs to the NAD(P)-dependent epimerase/dehydratase family. HldD subfamily. Homopentamer. NADP(+) is required as a cofactor.

It catalyses the reaction ADP-D-glycero-beta-D-manno-heptose = ADP-L-glycero-beta-D-manno-heptose. Its pathway is nucleotide-sugar biosynthesis; ADP-L-glycero-beta-D-manno-heptose biosynthesis; ADP-L-glycero-beta-D-manno-heptose from D-glycero-beta-D-manno-heptose 7-phosphate: step 4/4. Its function is as follows. Catalyzes the interconversion between ADP-D-glycero-beta-D-manno-heptose and ADP-L-glycero-beta-D-manno-heptose via an epimerization at carbon 6 of the heptose. The protein is ADP-L-glycero-D-manno-heptose-6-epimerase of Burkholderia vietnamiensis (strain G4 / LMG 22486) (Burkholderia cepacia (strain R1808)).